A 273-amino-acid polypeptide reads, in one-letter code: MIRLALFGSGVSSSLSPAIYRGFAAKRGLRLEYRVYEAGPGGLAPALRMAGELHGFNVTKPLKREALSLASTLDSHARAIGAVNTMVAGEEGWEGFNTDWKGFLDSLKLYTASPPDTALVIGAGGAGRAAAYALATWGAGRVLIASRTGLTARRAAQDLAGLGAEVEPVPPGGLEDAAAASDVVVNATPLGWDGVSTPVERGFREGCIAVDMVYRPLATPFLRRAAASGCTPVDGLWMLAIQAAENIAVWLGLEASPVELRTYALEAMRGGRG.

Shikimate is bound by residues 14–16 (SLS) and Thr59. The active-site Proton acceptor is Lys63. The shikimate site is built by Asn84 and Asp99. Residues 122–126 (GAGGA) and Met212 each bind NADP(+). Tyr214 is a binding site for shikimate. Gly235 serves as a coordination point for NADP(+).

This sequence belongs to the shikimate dehydrogenase family. In terms of assembly, homodimer.

It carries out the reaction shikimate + NADP(+) = 3-dehydroshikimate + NADPH + H(+). It participates in metabolic intermediate biosynthesis; chorismate biosynthesis; chorismate from D-erythrose 4-phosphate and phosphoenolpyruvate: step 4/7. In terms of biological role, involved in the biosynthesis of the chorismate, which leads to the biosynthesis of aromatic amino acids. Catalyzes the reversible NADPH linked reduction of 3-dehydroshikimate (DHSA) to yield shikimate (SA). The sequence is that of Shikimate dehydrogenase (NADP(+)) from Aeropyrum pernix (strain ATCC 700893 / DSM 11879 / JCM 9820 / NBRC 100138 / K1).